The chain runs to 290 residues: 33 kDa chaperonin (290 aa).

2 disulfide bridges follow: cysteine 235-cysteine 237 and cysteine 268-cysteine 271.

This sequence belongs to the HSP33 family. Under oxidizing conditions two disulfide bonds are formed involving the reactive cysteines. Under reducing conditions zinc is bound to the reactive cysteines and the protein is inactive.

It localises to the cytoplasm. In terms of biological role, redox regulated molecular chaperone. Protects both thermally unfolding and oxidatively damaged proteins from irreversible aggregation. Plays an important role in the bacterial defense system toward oxidative stress. This Streptococcus pyogenes serotype M49 protein is 33 kDa chaperonin.